Here is a 141-residue protein sequence, read N- to C-terminus: Hemoglobin subunit alpha-1/2/3 (141 aa).

Residues 1-141 form the Globin domain; the sequence is VLSPADKTNV…VGTVLTSKYR (141 aa). The residue at position 3 (Ser3) is a Phosphoserine. Lys7 carries the N6-succinyllysine modification. A Phosphothreonine modification is found at Thr8. An N6-succinyllysine modification is found at Lys11. Lys16 carries the post-translational modification N6-acetyllysine; alternate. An N6-succinyllysine; alternate modification is found at Lys16. Tyr24 carries the phosphotyrosine modification. Residue Ser35 is modified to Phosphoserine. Position 40 is an N6-succinyllysine (Lys40). Ser49 is modified (phosphoserine). His58 contributes to the O2 binding site. Residue His87 participates in heme b binding. The residue at position 102 (Ser102) is a Phosphoserine. Thr108 is subject to Phosphothreonine. Phosphoserine is present on residues Ser124 and Ser131. Residues Thr134 and Thr137 each carry the phosphothreonine modification. Ser138 carries the phosphoserine modification.

Belongs to the globin family. Heterotetramer of two alpha chains and two beta chains. Red blood cells.

Involved in oxygen transport from the lung to the various peripheral tissues. The protein is Hemoglobin subunit alpha-1/2/3 of Macaca nemestrina (Pig-tailed macaque).